The chain runs to 175 residues: Adenylate kinase isoenzyme 6 homolog (175 aa).

Residues G17, G19, K20, T21, and S22 each coordinate ATP. An NMPbind region spans residues 37 to 60; the sequence is DISSAVKEKELHDGWDSEFQCYIL. The interval 112-122 is LID; sequence KRNYNQHKITN. Residue R113 coordinates ATP.

Belongs to the adenylate kinase family. AK6 subfamily. As to quaternary structure, monomer and homodimer. Interacts with small ribosomal subunit protein uS11. Not a structural component of 43S pre-ribosomes, but transiently interacts with them by binding to uS11.

The protein localises to the cytoplasm. The protein resides in the nucleus. The catalysed reaction is AMP + ATP = 2 ADP. It carries out the reaction ATP + H2O = ADP + phosphate + H(+). Broad-specificity nucleoside monophosphate (NMP) kinase that catalyzes the reversible transfer of the terminal phosphate group between nucleoside triphosphates and monophosphates. Also has ATPase activity. Involved in the late cytoplasmic maturation steps of the 40S ribosomal particles, specifically 18S rRNA maturation. While NMP activity is not required for ribosome maturation, ATPase activity is. Associates transiently with small ribosomal subunit protein uS11. ATP hydrolysis breaks the interaction with uS11. May temporarily remove uS11 from the ribosome to enable a conformational change of the ribosomal RNA that is needed for the final maturation step of the small ribosomal subunit. Its NMP activity may have a role in nuclear energy homeostasis. In Dictyostelium discoideum (Social amoeba), this protein is Adenylate kinase isoenzyme 6 homolog.